Here is a 445-residue protein sequence, read N- to C-terminus: Retrovirus-related Pol polyprotein from type-1 retrotransposable element R2 (445 aa).

Residues 1-114 (QPSVFNLVKW…LSRDDSLAKA (114 aa)) form the Reverse transcriptase domain. Residues 115–445 (MLASAGPAAE…GATPRQLIEY (331 aa)) form a nucleic acid-binding endonuclease region. Over residues 380-389 (GPRPAHHHQP) the composition is skewed to basic residues. Residues 380–445 (GPRPAHHHQP…GATPRQLIEY (66 aa)) form a disordered region. Over residues 396-405 (ATANTGTLQS) the composition is skewed to polar residues.

The enzyme catalyses DNA(n) + a 2'-deoxyribonucleoside 5'-triphosphate = DNA(n+1) + diphosphate. This chain is Retrovirus-related Pol polyprotein from type-1 retrotransposable element R2, found in Popillia japonica (Japanese beetle).